Consider the following 433-residue polypeptide: Aspartate--tRNA(Asp/Asn) ligase (433 aa).

Glu167 is an L-aspartate binding site. The tract at residues 189–192 (QLFK) is aspartate. Arg211 serves as a coordination point for L-aspartate. ATP contacts are provided by residues 211 to 213 (RAE), 219 to 221 (RHL), and Glu356. Positions 356 and 359 each coordinate Mg(2+). Positions 359 and 363 each coordinate L-aspartate. 404–407 (GGER) is an ATP binding site.

It belongs to the class-II aminoacyl-tRNA synthetase family. Type 2 subfamily. As to quaternary structure, homodimer. Requires Mg(2+) as cofactor.

The protein localises to the cytoplasm. It carries out the reaction tRNA(Asx) + L-aspartate + ATP = L-aspartyl-tRNA(Asx) + AMP + diphosphate. Aspartyl-tRNA synthetase with relaxed tRNA specificity since it is able to aspartylate not only its cognate tRNA(Asp) but also tRNA(Asn). Reaction proceeds in two steps: L-aspartate is first activated by ATP to form Asp-AMP and then transferred to the acceptor end of tRNA(Asp/Asn). This is Aspartate--tRNA(Asp/Asn) ligase from Natronomonas pharaonis (strain ATCC 35678 / DSM 2160 / CIP 103997 / JCM 8858 / NBRC 14720 / NCIMB 2260 / Gabara) (Halobacterium pharaonis).